The following is a 478-amino-acid chain: CDK5 and ABL1 enzyme substrate 2 (478 aa).

Residues 1-121 (MAAAAAGGAP…GLGLDGQRQR (121 aa)) form a disordered region. The segment covering 11-24 (GPAPGPAGPPPPAA) has biased composition (pro residues). The span at 25–35 (PTSAARAPPQA) shows a compositional bias: low complexity. The span at 36–46 (LRRRGDSRRRQ) shows a compositional bias: basic residues. Over residues 69–92 (EKPPPPPAEAREPPAPPPPEPPTG) the composition is skewed to pro residues. Residues S130 and S208 each carry the phosphoserine modification. A disordered region spans residues 257–296 (SDSHGLLPTPRPSVPRTLPGSRHKPAPTKSAPASTELGSD).

The protein belongs to the cyclin family. In terms of assembly, binds to CDK3, CDK5 and ABL1. The C-terminal cyclin-box-like region binds to CDK5.

Functionally, unknown. Probably involved in G1-S cell cycle transition. In Homo sapiens (Human), this protein is CDK5 and ABL1 enzyme substrate 2 (CABLES2).